The chain runs to 416 residues: Enterobactin exporter EntS (416 aa).

The Cytoplasmic portion of the chain corresponds to 1–21 (MNKQSWLLNLSLLKTHPAFRA). Residues 22-42 (VFLARFISIVSLGLLGVAVPV) traverse the membrane as a helical segment. Over 43-55 (QIQMMTHSTWQVG) the chain is Periplasmic. The helical transmembrane segment at 56–76 (LSVTLTGGAMFVGLMVGGVLA) threads the bilayer. Residues 77–83 (DRYERKK) lie on the Cytoplasmic side of the membrane. A helical membrane pass occupies residues 84-104 (VILLARGTCGIGFIGLCLNAL). The Periplasmic portion of the chain corresponds to 105 to 109 (LPEPS). A helical membrane pass occupies residues 110-130 (LLAIYLLGLWDGFFASLGVTA). The Cytoplasmic portion of the chain corresponds to 131–156 (LLAATPALVGRENLMQAGAITMLTVR). Residues 157 to 177 (LGSVISPMIGGLLLATGGVAW) form a helical membrane-spanning segment. Asn-178 is a topological domain (periplasmic). A helical membrane pass occupies residues 179–199 (YGLAAAGTFITLLPLLSLPAL). Residues 200–218 (PPPPQPREHPLKSLLAGFR) are Cytoplasmic-facing. Residues 219–239 (FLLASPLVGGIALLGGLLTMA) form a helical membrane-spanning segment. Residues 240–256 (SAVRVLYPALADNWQMS) are Periplasmic-facing. Residues 257 to 277 (AAQIGFLYAAIPLGAAIGALT) form a helical membrane-spanning segment. The Cytoplasmic segment spans residues 278 to 287 (SGKLAHSARP). The helical transmembrane segment at 288–307 (GLLMLLSTLGSFLAIGLFGL) threads the bilayer. At 308–313 (MPMWIL) the chain is on the periplasmic side. Residues 314–336 (GVVCLALFGWLSAVSSLLQYTML) traverse the membrane as a helical segment. The Cytoplasmic segment spans residues 337 to 356 (QTQTPEAMLGRINGLWTAQN). A helical membrane pass occupies residues 357 to 377 (VTGDAIGAALLGGLGAMMTPV). Residue Ala-378 is a topological domain, periplasmic. The helical transmembrane segment at 379–399 (SASASGFGLLIIGVLLLLVLV) threads the bilayer. At 400-416 (ELRHFRQTPPQVTASDS) the chain is on the cytoplasmic side.

This sequence belongs to the major facilitator superfamily. EntS (TC 2.A.1.38) family.

Its subcellular location is the cell inner membrane. In terms of biological role, component of an export pathway for enterobactin. The chain is Enterobactin exporter EntS from Escherichia coli (strain K12 / MC4100 / BW2952).